Consider the following 122-residue polypeptide: Phosphoribosyl-ATP pyrophosphatase (122 aa).

This sequence belongs to the PRA-PH family.

It localises to the cytoplasm. It carries out the reaction 1-(5-phospho-beta-D-ribosyl)-ATP + H2O = 1-(5-phospho-beta-D-ribosyl)-5'-AMP + diphosphate + H(+). It functions in the pathway amino-acid biosynthesis; L-histidine biosynthesis; L-histidine from 5-phospho-alpha-D-ribose 1-diphosphate: step 2/9. This Burkholderia thailandensis (strain ATCC 700388 / DSM 13276 / CCUG 48851 / CIP 106301 / E264) protein is Phosphoribosyl-ATP pyrophosphatase.